The primary structure comprises 420 residues: MSHGKMPLVLSLVLILCGLFNSISCEKQQTSPKTITPVSFKRIAALSQKMEANYKAFAQELFKTLLIEDPRKNMIFSPVSISISLATLSLGLRSATRTNAIDVLERDLRNLRVWDKHQALQHLVEMLHELEKKKQLKHKDIFFIDRNKKMNQMFLKEIDRVYKVDIQMIDFKDKEKTKKAINQFVADKIDKKAKNLITHLDPQTLLCLVNYVFFKGILERAFQTNLTKKEDFFVNEKTIVQVDMMRKTERMIYSRSEELLATMVKMPCKENASIILVLPDTGKFDFALKEMAAKRARLQKTNELQIGALSCAQDQDHLQDRFKHLLPKIGINDIFTTKAVTWNTTRTSTILEAVHHAVIEVKEDGLTKNAAKDKDFWKVPVDKKEVPVVVKFDRPFFLFVEDEITRRDLFVAKVFNPKTE.

The signal sequence occupies residues M1–C25. Residues N225, N271, and N343 are each glycosylated (N-linked (GlcNAc...) asparagine).

Belongs to the serpin family. UTMP subfamily.

It localises to the secreted. The protein localises to the extracellular space. This chain is Uteroferrin-associated basic protein 2, found in Sus scrofa (Pig).